The chain runs to 254 residues: Phosphoribosylaminoimidazole-succinocarboxamide synthase (254 aa).

It belongs to the SAICAR synthetase family.

The catalysed reaction is 5-amino-1-(5-phospho-D-ribosyl)imidazole-4-carboxylate + L-aspartate + ATP = (2S)-2-[5-amino-1-(5-phospho-beta-D-ribosyl)imidazole-4-carboxamido]succinate + ADP + phosphate + 2 H(+). The protein operates within purine metabolism; IMP biosynthesis via de novo pathway; 5-amino-1-(5-phospho-D-ribosyl)imidazole-4-carboxamide from 5-amino-1-(5-phospho-D-ribosyl)imidazole-4-carboxylate: step 1/2. The polypeptide is Phosphoribosylaminoimidazole-succinocarboxamide synthase (Brucella canis (strain ATCC 23365 / NCTC 10854 / RM-666)).